The primary structure comprises 362 residues: tRNA/tmRNA (uracil-C(5))-methyltransferase (362 aa).

Residues glutamine 186, tyrosine 214, asparagine 219, glutamate 235, and aspartate 295 each coordinate S-adenosyl-L-methionine. The Nucleophile role is filled by cysteine 320. Glutamate 354 functions as the Proton acceptor in the catalytic mechanism.

It belongs to the class I-like SAM-binding methyltransferase superfamily. RNA M5U methyltransferase family. TrmA subfamily.

The catalysed reaction is uridine(54) in tRNA + S-adenosyl-L-methionine = 5-methyluridine(54) in tRNA + S-adenosyl-L-homocysteine + H(+). It catalyses the reaction uridine(341) in tmRNA + S-adenosyl-L-methionine = 5-methyluridine(341) in tmRNA + S-adenosyl-L-homocysteine + H(+). Functionally, dual-specificity methyltransferase that catalyzes the formation of 5-methyluridine at position 54 (m5U54) in all tRNAs, and that of position 341 (m5U341) in tmRNA (transfer-mRNA). This chain is tRNA/tmRNA (uracil-C(5))-methyltransferase, found in Dechloromonas aromatica (strain RCB).